An 86-amino-acid chain; its full sequence is Small ribosomal subunit protein bS20 (86 aa).

Positions 1–25 are disordered; that stretch reads MANIKSQMKRIKTNEANRQRNKAVK.

This sequence belongs to the bacterial ribosomal protein bS20 family.

In terms of biological role, binds directly to 16S ribosomal RNA. This is Small ribosomal subunit protein bS20 from Saccharopolyspora erythraea (strain ATCC 11635 / DSM 40517 / JCM 4748 / NBRC 13426 / NCIMB 8594 / NRRL 2338).